A 265-amino-acid polypeptide reads, in one-letter code: Synaptoporin (265 aa).

At Met1–Val4 the chain is on the cytoplasmic side. An MARVEL domain is found at Met1 to Gly202. Residues Ile5 to Leu25 form a helical membrane-spanning segment. At Arg26–Phe81 the chain is on the vesicular side. N-linked (GlcNAc...) asparagine glycosylation is found at Asn33 and Asn38. The chain crosses the membrane as a helical span at residues Phe82–Phe102. Topologically, residues Phe103–Pro114 are cytoplasmic. Residues Leu115 to Trp135 traverse the membrane as a helical segment. Topologically, residues Ala136 to Asn177 are vesicular. The chain crosses the membrane as a helical span at residues Thr178–Phe198. The Cytoplasmic portion of the chain corresponds to Lys199–Ile265. Tandem repeats lie at residues Tyr210–Pro214, Tyr222–Arg226, Tyr227–Ser231, Tyr232–Gly236, and Tyr238–Ala242. Positions Tyr210–Ala242 are 5 X approximate repeats. Ser212 is modified (phosphoserine). The segment covering Ser221–Glu230 has biased composition (polar residues). The tract at residues Ser221–Ile265 is disordered. Residues Gln240–Ile265 are compositionally biased toward polar residues.

The protein belongs to the synaptophysin/synaptobrevin family.

It localises to the cytoplasmic vesicle. Its subcellular location is the secretory vesicle. The protein resides in the synaptic vesicle membrane. It is found in the synapse. The protein localises to the synaptosome. In terms of biological role, intrinsic membrane protein of small synaptic vesicles. Probable vesicular channel protein. The protein is Synaptoporin (Synpr) of Mus musculus (Mouse).